A 302-amino-acid chain; its full sequence is Arginase (302 aa).

Mn(2+)-binding residues include His103, Asp126, His128, and Asp130. Substrate is bound by residues 128 to 132, 139 to 141, and Asp180; these read HGDLN and SGN. Mn(2+) is bound by residues Asp229 and Asp231. Substrate-binding residues include Thr243 and Glu274.

Belongs to the arginase family. The cofactor is Mn(2+).

It catalyses the reaction L-arginine + H2O = urea + L-ornithine. Its pathway is nitrogen metabolism; urea cycle; L-ornithine and urea from L-arginine: step 1/1. This chain is Arginase (arg), found in Staphylococcus aureus (strain MSSA476).